Consider the following 307-residue polypeptide: O-acetylserine dependent cystathionine beta-synthase (307 aa).

Lys44 is modified (N6-(pyridoxal phosphate)lysine). Residues Asn74, 178 to 182 (GSGGT), and Ser265 each bind pyridoxal 5'-phosphate.

Belongs to the cysteine synthase/cystathionine beta-synthase family. Pyridoxal 5'-phosphate is required as a cofactor.

It carries out the reaction O-acetyl-L-serine + L-homocysteine = L,L-cystathionine + acetate + H(+). Its function is as follows. Catalyzes the conversion of O-acetylserine and homocysteine to cystathionine. The protein is O-acetylserine dependent cystathionine beta-synthase (mccA) of Bacillus subtilis (strain 168).